A 548-amino-acid chain; its full sequence is Protoporphyrinogen oxidase, chloroplastic (548 aa).

The transit peptide at 1–50 (MTTTPIANHPNIFTHQSSSSPLAFLNRTSFIPFSSISKRNSVNCNGWRTR) directs the protein to the chloroplast. FAD-binding positions include 78–83 (GAGISG), 101–102 (EA), and 123–126 (GPNS). Basic and acidic residues predominate over residues 265–279 (KERSSTPKAPRDPRL). The disordered stretch occupies residues 265–287 (KERSSTPKAPRDPRLPKPKGQTV). 522 to 524 (VAL) contacts FAD.

Belongs to the protoporphyrinogen/coproporphyrinogen oxidase family. Protoporphyrinogen oxidase subfamily. In terms of assembly, homodimer. FAD serves as cofactor.

It localises to the plastid. The protein resides in the chloroplast. It catalyses the reaction protoporphyrinogen IX + 3 O2 = protoporphyrin IX + 3 H2O2. The protein operates within porphyrin-containing compound metabolism; protoporphyrin-IX biosynthesis; protoporphyrin-IX from protoporphyrinogen-IX: step 1/1. Its pathway is porphyrin-containing compound metabolism; chlorophyll biosynthesis. In terms of biological role, catalyzes the 6-electron oxidation of protoporphyrinogen-IX to form protoporphyrin-IX. In Nicotiana tabacum (Common tobacco), this protein is Protoporphyrinogen oxidase, chloroplastic (PPXI).